Reading from the N-terminus, the 230-residue chain is Fibrillarin-like rRNA/tRNA 2'-O-methyltransferase (230 aa).

S-adenosyl-L-methionine-binding positions include 87 to 88 (TT), 105 to 106 (EF), 130 to 131 (DA), and 150 to 153 (DVAQ).

The protein belongs to the methyltransferase superfamily. Fibrillarin family. Interacts with nop5. Component of box C/D small ribonucleoprotein (sRNP) particles that contain rpl7ae, FlpA and nop5, plus a guide RNA.

Its function is as follows. Involved in pre-rRNA and tRNA processing. Utilizes the methyl donor S-adenosyl-L-methionine to catalyze the site-specific 2'-hydroxyl methylation of ribose moieties in rRNA and tRNA. Site specificity is provided by a guide RNA that base pairs with the substrate. Methylation occurs at a characteristic distance from the sequence involved in base pairing with the guide RNA. This is Fibrillarin-like rRNA/tRNA 2'-O-methyltransferase from Methanococcus maripaludis (strain C5 / ATCC BAA-1333).